The following is a 79-amino-acid chain: Putative membrane protein insertion efficiency factor (79 aa).

Belongs to the UPF0161 family.

The protein localises to the cell inner membrane. Could be involved in insertion of integral membrane proteins into the membrane. This is Putative membrane protein insertion efficiency factor from Bacteroides thetaiotaomicron (strain ATCC 29148 / DSM 2079 / JCM 5827 / CCUG 10774 / NCTC 10582 / VPI-5482 / E50).